Consider the following 311-residue polypeptide: 3'(2'),5'-bisphosphate nucleotidase 1 (311 aa).

The active-site Proton acceptor is the Asp49. Residues Glu72, Asp116, Leu118, and Asp119 each coordinate Mg(2+). Residue Thr121 is the Proton acceptor of the active site. The AMP site is built by Thr202, His205, Gly227, and Lys231. Residue Asp254 coordinates Mg(2+).

Belongs to the inositol monophosphatase superfamily. Mg(2+) serves as cofactor.

The enzyme catalyses adenosine 3',5'-bisphosphate + H2O = AMP + phosphate. It carries out the reaction adenosine 2',5'-bisphosphate + H2O = AMP + phosphate. The catalysed reaction is 3'-phosphoadenylyl sulfate + H2O = adenosine 5'-phosphosulfate + phosphate. It catalyses the reaction 1D-myo-inositol 1,4-bisphosphate + H2O = 1D-myo-inositol 4-phosphate + phosphate. The enzyme catalyses 1D-myo-inositol 1,3,4-trisphosphate + H2O = 1D-myo-inositol 3,4-bisphosphate + phosphate. Its activity is regulated as follows. Inhibited by Li(+) and Ca(2+), but not by Na(+). Phosphatase that converts 3'(2')-phosphoadenosine 5'-phosphate (PAP) to AMP and adenosine 3'-phosphate 5'-phosphosulfate (PAPS) to adenosine 5'-phosphosulfate (APS). Is also able to hydrolyze inositol 1,4-bisphosphate (Ins(1,4)P2) and inositol 1,3,4-trisphosphate (Ins(1,3,4)P3), but is not active on AMP, 3'-AMP, fructose-1,6-bisphosphate, Ins(1)P, Ins(2)P and Ins(1,4,5)P3. Probably prevents the toxic accumulation of PAP, a compound which inhibits a variety of proteins, including PAPS-utilizing enzymes such as sulfotransferases, and RNA processing enzymes. Could also play a role in inositol recycling and phosphoinositide metabolism. The sequence is that of 3'(2'),5'-bisphosphate nucleotidase 1 (bpnt1) from Dictyostelium discoideum (Social amoeba).